We begin with the raw amino-acid sequence, 298 residues long: Ribosomal protein L11 methyltransferase (298 aa).

Positions 152, 173, 195, and 234 each coordinate S-adenosyl-L-methionine.

This sequence belongs to the methyltransferase superfamily. PrmA family.

It is found in the cytoplasm. The catalysed reaction is L-lysyl-[protein] + 3 S-adenosyl-L-methionine = N(6),N(6),N(6)-trimethyl-L-lysyl-[protein] + 3 S-adenosyl-L-homocysteine + 3 H(+). Its function is as follows. Methylates ribosomal protein L11. The polypeptide is Ribosomal protein L11 methyltransferase (Ralstonia nicotianae (strain ATCC BAA-1114 / GMI1000) (Ralstonia solanacearum)).